The following is a 949-amino-acid chain: Inactive atromentin synthetase invA3 (949 aa).

Positions 38-460 are adenylation (A) domain; it reads RAVSQYPNHE…SGRIKDTVVV (423 aa). Residues 592-670 enclose the Carrier domain; it reads ALSTETEKTL…NLAKYVDSLV (79 aa). Residues 597–667 form a thiolation and peptide carrier (T) domain region; that stretch reads TEKTLAGIYA…VISNLAKYVD (71 aa). The residue at position 629 (Ser-629) is an O-(pantetheine 4'-phosphoryl)serine. The thioesterase (TE) domain stretch occupies residues 693 to 934; sequence PIFMVHPGMA…YTLMDFDHVA (242 aa).

This sequence belongs to the ATP-dependent AMP-binding enzyme family.

In terms of biological role, inactive atromentin synthetase homolog. While the invA3 adenylation (A) domain is capable of adenylating 4-hydroxyphenylpyruvate (4-HPP), the invA3 enzyme is inactive because of its non-functional thioesterase (TE) domain. In Paxillus involutus (Naked brimcap), this protein is Inactive atromentin synthetase invA3 (invA3).